Reading from the N-terminus, the 500-residue chain is Probable malate:quinone oxidoreductase (500 aa).

This sequence belongs to the MQO family. FAD serves as cofactor.

It carries out the reaction (S)-malate + a quinone = a quinol + oxaloacetate. It participates in carbohydrate metabolism; tricarboxylic acid cycle; oxaloacetate from (S)-malate (quinone route): step 1/1. In Gluconobacter oxydans (strain 621H) (Gluconobacter suboxydans), this protein is Probable malate:quinone oxidoreductase.